A 92-amino-acid polypeptide reads, in one-letter code: Small ribosomal subunit protein uS19 (92 aa).

Belongs to the universal ribosomal protein uS19 family.

In terms of biological role, protein S19 forms a complex with S13 that binds strongly to the 16S ribosomal RNA. In Lachnoclostridium phytofermentans (strain ATCC 700394 / DSM 18823 / ISDg) (Clostridium phytofermentans), this protein is Small ribosomal subunit protein uS19.